Consider the following 369-residue polypeptide: Cobalt-precorrin-5B C(1)-methyltransferase (369 aa).

Belongs to the CbiD family.

It carries out the reaction Co-precorrin-5B + S-adenosyl-L-methionine = Co-precorrin-6A + S-adenosyl-L-homocysteine. It functions in the pathway cofactor biosynthesis; adenosylcobalamin biosynthesis; cob(II)yrinate a,c-diamide from sirohydrochlorin (anaerobic route): step 6/10. Functionally, catalyzes the methylation of C-1 in cobalt-precorrin-5B to form cobalt-precorrin-6A. In Brucella melitensis biotype 1 (strain ATCC 23456 / CCUG 17765 / NCTC 10094 / 16M), this protein is Cobalt-precorrin-5B C(1)-methyltransferase.